The following is a 182-amino-acid chain: Glutathione-regulated potassium-efflux system ancillary protein KefG (182 aa).

This sequence belongs to the NAD(P)H dehydrogenase (quinone) family. KefG subfamily. In terms of assembly, interacts with KefB.

The protein localises to the cell inner membrane. It catalyses the reaction a quinone + NADH + H(+) = a quinol + NAD(+). It carries out the reaction a quinone + NADPH + H(+) = a quinol + NADP(+). In terms of biological role, regulatory subunit of a potassium efflux system that confers protection against electrophiles. Required for full activity of KefB. The protein is Glutathione-regulated potassium-efflux system ancillary protein KefG of Yersinia pestis bv. Antiqua (strain Nepal516).